The following is a 234-amino-acid chain: N-(5'-phosphoribosyl)anthranilate isomerase 1 (234 aa).

It belongs to the TrpF family.

The enzyme catalyses N-(5-phospho-beta-D-ribosyl)anthranilate = 1-(2-carboxyphenylamino)-1-deoxy-D-ribulose 5-phosphate. It participates in amino-acid biosynthesis; L-tryptophan biosynthesis; L-tryptophan from chorismate: step 3/5. In Methanosarcina mazei (strain ATCC BAA-159 / DSM 3647 / Goe1 / Go1 / JCM 11833 / OCM 88) (Methanosarcina frisia), this protein is N-(5'-phosphoribosyl)anthranilate isomerase 1 (trpF1).